The chain runs to 138 residues: Acidic phospholipase A2 inhibitor vaspin A chain (138 aa).

Residues 1–16 (MRTLWIVAVCLIGVEG) form the signal peptide. 7 cysteine pairs are disulfide-bonded: cysteine 42-cysteine 131, cysteine 44-cysteine 60, cysteine 59-cysteine 111, cysteine 65-cysteine 138, cysteine 66-cysteine 104, cysteine 73-cysteine 97, and cysteine 91-cysteine 102.

The protein belongs to the phospholipase A2 family. Group II subfamily. D49 sub-subfamily. Heterodimer of a toxic basic protein having phospholipase A2 activity (B chain (AC Q8JFG0)) and a non-toxic acidic protein functioning as its inhibitor (A chain). Expressed by the venom gland.

It is found in the secreted. Functionally, heterodimer: postsynaptic neurotoxin. Monomer: the acidic chain inhibits the basic phospholipase A2 of the complex. The protein is Acidic phospholipase A2 inhibitor vaspin A chain of Vipera aspis aspis (Aspic viper).